A 476-amino-acid chain; its full sequence is Glucose-1-phosphate adenylyltransferase (476 aa).

Residues Tyr114, Gly179, 194–195 (EK), and Ser212 contribute to the alpha-D-glucose 1-phosphate site.

Belongs to the bacterial/plant glucose-1-phosphate adenylyltransferase family. As to quaternary structure, homotetramer.

It carries out the reaction alpha-D-glucose 1-phosphate + ATP + H(+) = ADP-alpha-D-glucose + diphosphate. It functions in the pathway glycan biosynthesis; glycogen biosynthesis. Its function is as follows. Involved in the biosynthesis of ADP-glucose, a building block required for the elongation reactions to produce glycogen. Catalyzes the reaction between ATP and alpha-D-glucose 1-phosphate (G1P) to produce pyrophosphate and ADP-Glc. This chain is Glucose-1-phosphate adenylyltransferase, found in Yersinia pestis bv. Antiqua (strain Antiqua).